We begin with the raw amino-acid sequence, 313 residues long: Short-chain dehydrogenase/reductase family 9C member 7 (313 aa).

Position 29 to 53 (Phe29 to Leu53) interacts with NADP(+). Ser160 serves as a coordination point for substrate. Tyr172 acts as the Proton acceptor in catalysis. Ser185 carries the post-translational modification Phosphoserine.

It belongs to the short-chain dehydrogenases/reductases (SDR) family. In terms of tissue distribution, highly expressed in liver.

The protein resides in the cytoplasm. It catalyses the reaction a N-[omega-(9R,10R)-epoxy-(13R)-hydroxy-(11E)-octadecenoyloxy]acyl-beta-D-glucosyl-(1&lt;-&gt;1)-sphing-4E-enine + NAD(+) = a N-[omega-(9R,10R)-epoxy-13-oxo-(11E)-octadecenoyloxy]acyl-beta-D-glucosyl-(1&lt;-&gt;1)-sphing-4E-enine + NADH + H(+). It carries out the reaction a N-[omega-(9R,10R)-epoxy-(13R)-hydroxy-(11E)-octadecenoyloxy]-acylsphing-4E-enine + NAD(+) = a N-[omega-(9R,10R)-epoxy-13-oxo-(11E)-octadecenoyloxy]-acylsphing-4E-enine + NADH + H(+). Plays a crucial role in the formation of the epidermal permeability barrier. Catalyzes the NAD+-dependent dehydrogenation of the linoleate 9,10-trans-epoxy-11E-13-alcohol esterified in omega-O-acylceramides (such as in N-[omega-(9R,10R)-epoxy-(13R)-hydroxy-(11E)-octadecenoyloxy]-acylsphing-4E-enine) to the corresponding 13-ketone, the reactive moiety required for binding of epidermal ceramides to proteins. Displays weak conversion of all-trans-retinal to all-trans-retinol in the presence of NADH. Has apparently no steroid dehydrogenase activity. The polypeptide is Short-chain dehydrogenase/reductase family 9C member 7 (Sdr9c7) (Mus musculus (Mouse)).